The primary structure comprises 262 residues: Hydroxyethylthiazole kinase (262 aa).

M50 lines the substrate pocket. 2 residues coordinate ATP: R125 and T171. G198 provides a ligand contact to substrate.

This sequence belongs to the Thz kinase family. Mg(2+) serves as cofactor.

It carries out the reaction 5-(2-hydroxyethyl)-4-methylthiazole + ATP = 4-methyl-5-(2-phosphooxyethyl)-thiazole + ADP + H(+). The protein operates within cofactor biosynthesis; thiamine diphosphate biosynthesis; 4-methyl-5-(2-phosphoethyl)-thiazole from 5-(2-hydroxyethyl)-4-methylthiazole: step 1/1. Its function is as follows. Catalyzes the phosphorylation of the hydroxyl group of 4-methyl-5-beta-hydroxyethylthiazole (THZ). The sequence is that of Hydroxyethylthiazole kinase from Escherichia coli O45:K1 (strain S88 / ExPEC).